A 121-amino-acid polypeptide reads, in one-letter code: Large ribosomal subunit protein bL12 (121 aa).

It belongs to the bacterial ribosomal protein bL12 family. Homodimer. Part of the ribosomal stalk of the 50S ribosomal subunit. Forms a multimeric L10(L12)X complex, where L10 forms an elongated spine to which 2 to 4 L12 dimers bind in a sequential fashion. Binds GTP-bound translation factors.

Functionally, forms part of the ribosomal stalk which helps the ribosome interact with GTP-bound translation factors. Is thus essential for accurate translation. In Streptococcus uberis (strain ATCC BAA-854 / 0140J), this protein is Large ribosomal subunit protein bL12.